Reading from the N-terminus, the 253-residue chain is MLTENYNKQAIAQAFGRAAGCYDRFAELQRTSGERLLALMPAHSGLQVLDAGCGTGHFSRYWRQAGRNVTALDLSAEMLAYAREQHAADRYLEGDIENLPLADSCVDICYSNLAVQWCDSLPRALGELYRITRPGGVIAFATLADGSLSELSQAWQRLDGTQRTNRFLPHSVIDAACQPYRHHLLQEREVCLFPDVLALMKSLKGIGATWLHEGRTPGLLSRARLAALSACYPQEQGGYPLSYQLVYGVIYRD.

The protein belongs to the methyltransferase superfamily.

It catalyses the reaction malonyl-[ACP] + S-adenosyl-L-methionine = malonyl-[ACP] methyl ester + S-adenosyl-L-homocysteine. The protein operates within cofactor biosynthesis; biotin biosynthesis. In terms of biological role, converts the free carboxyl group of a malonyl-thioester to its methyl ester by transfer of a methyl group from S-adenosyl-L-methionine (SAM). It allows to synthesize pimeloyl-ACP via the fatty acid synthetic pathway. This Pectobacterium atrosepticum (strain SCRI 1043 / ATCC BAA-672) (Erwinia carotovora subsp. atroseptica) protein is Malonyl-[acyl-carrier protein] O-methyltransferase.